The sequence spans 161 residues: Ribonuclease P protein component 2 (161 aa).

The protein belongs to the eukaryotic/archaeal RNase P protein component 2 family. In terms of assembly, consists of a catalytic RNA component and at least 4-5 protein subunits.

Its subcellular location is the cytoplasm. It catalyses the reaction Endonucleolytic cleavage of RNA, removing 5'-extranucleotides from tRNA precursor.. Its function is as follows. Part of ribonuclease P, a protein complex that generates mature tRNA molecules by cleaving their 5'-ends. This Methanopyrus kandleri (strain AV19 / DSM 6324 / JCM 9639 / NBRC 100938) protein is Ribonuclease P protein component 2.